We begin with the raw amino-acid sequence, 122 residues long: Large ribosomal subunit protein uL14c (122 aa).

This sequence belongs to the universal ribosomal protein uL14 family. Part of the 50S ribosomal subunit.

It localises to the plastid. The protein localises to the chloroplast. Functionally, binds to 23S rRNA. This is Large ribosomal subunit protein uL14c from Phaseolus vulgaris (Kidney bean).